The following is a 571-amino-acid chain: Proline--tRNA ligase (571 aa).

It belongs to the class-II aminoacyl-tRNA synthetase family. ProS type 1 subfamily. Homodimer.

Its subcellular location is the cytoplasm. It catalyses the reaction tRNA(Pro) + L-proline + ATP = L-prolyl-tRNA(Pro) + AMP + diphosphate. Its function is as follows. Catalyzes the attachment of proline to tRNA(Pro) in a two-step reaction: proline is first activated by ATP to form Pro-AMP and then transferred to the acceptor end of tRNA(Pro). As ProRS can inadvertently accommodate and process non-cognate amino acids such as alanine and cysteine, to avoid such errors it has two additional distinct editing activities against alanine. One activity is designated as 'pretransfer' editing and involves the tRNA(Pro)-independent hydrolysis of activated Ala-AMP. The other activity is designated 'posttransfer' editing and involves deacylation of mischarged Ala-tRNA(Pro). The misacylated Cys-tRNA(Pro) is not edited by ProRS. This is Proline--tRNA ligase from Pseudomonas syringae pv. syringae (strain B728a).